The chain runs to 116 residues: Putative gamma-glutamylcyclotransferase PH0828 (116 aa).

A substrate-binding site is contributed by 13–16 (YGTL). Glutamate 76 serves as the catalytic Proton acceptor.

This sequence belongs to the gamma-glutamylcyclotransferase family.

Putative gamma-glutamylcyclotransferase. The protein is Putative gamma-glutamylcyclotransferase PH0828 of Pyrococcus horikoshii (strain ATCC 700860 / DSM 12428 / JCM 9974 / NBRC 100139 / OT-3).